Consider the following 416-residue polypeptide: Phosphoglycerate kinase (416 aa).

(2R)-3-phosphoglycerate-binding residues include Val23, Asp24, Phe25, Asn26, Gln38, Arg39, Ser62, His63, Gly65, Arg66, Leu121, Arg122, His169, and Arg170. Residue Gly213 coordinates ADP. Gly213 is a binding site for CDP. Ala214 and Lys215 together coordinate AMP. Ala214 lines the ATP pocket. Ala214 serves as a coordination point for Mg(2+). Position 218 (Asp218) interacts with CDP. A Mg(2+)-binding site is contributed by Asp218. Lys219 serves as a coordination point for AMP. Lys219 is a binding site for ATP. Position 237 (Gly237) interacts with ADP. CDP is bound at residue Gly237. AMP contacts are provided by Gly238 and Gly312. ATP is bound by residues Gly238 and Gly312. Residues Gly337, Ala339, and Phe342 each coordinate CDP. Phe342 contributes to the ADP binding site. Glu343 is an AMP binding site. Glu343, Asp374, and Thr375 together coordinate ATP. A Mg(2+)-binding site is contributed by Asp374.

The protein belongs to the phosphoglycerate kinase family. As to quaternary structure, monomer. The cofactor is Mg(2+).

It is found in the cytoplasm. It localises to the mitochondrion. It carries out the reaction (2R)-3-phosphoglycerate + ATP = (2R)-3-phospho-glyceroyl phosphate + ADP. It functions in the pathway carbohydrate degradation; glycolysis; pyruvate from D-glyceraldehyde 3-phosphate: step 2/5. Its function is as follows. Catalyzes one of the two ATP producing reactions in the glycolytic pathway via the reversible conversion of 1,3-diphosphoglycerate to 3-phosphoglycerate. Both L- and D- forms of purine and pyrimidine nucleotides can be used as substrates, but the activity is much lower on pyrimidines. Negatively regulates the biosynthesis of acetyl-CoA from pyruvate in the mitochondrion. The polypeptide is Phosphoglycerate kinase (PGK) (Funneliformis mosseae (Endomycorrhizal fungus)).